Here is a 294-residue protein sequence, read N- to C-terminus: Phosphatidylserine decarboxylase proenzyme (294 aa).

Catalysis depends on charge relay system; for autoendoproteolytic cleavage activity residues D92, H149, and S252. The active-site Schiff-base intermediate with substrate; via pyruvic acid; for decarboxylase activity is the S252. A Pyruvic acid (Ser); by autocatalysis modification is found at S252.

The protein belongs to the phosphatidylserine decarboxylase family. PSD-B subfamily. Prokaryotic type I sub-subfamily. Heterodimer of a large membrane-associated beta subunit and a small pyruvoyl-containing alpha subunit. It depends on pyruvate as a cofactor. Is synthesized initially as an inactive proenzyme. Formation of the active enzyme involves a self-maturation process in which the active site pyruvoyl group is generated from an internal serine residue via an autocatalytic post-translational modification. Two non-identical subunits are generated from the proenzyme in this reaction, and the pyruvate is formed at the N-terminus of the alpha chain, which is derived from the carboxyl end of the proenzyme. The autoendoproteolytic cleavage occurs by a canonical serine protease mechanism, in which the side chain hydroxyl group of the serine supplies its oxygen atom to form the C-terminus of the beta chain, while the remainder of the serine residue undergoes an oxidative deamination to produce ammonia and the pyruvoyl prosthetic group on the alpha chain. During this reaction, the Ser that is part of the protease active site of the proenzyme becomes the pyruvoyl prosthetic group, which constitutes an essential element of the active site of the mature decarboxylase.

Its subcellular location is the cell membrane. It carries out the reaction a 1,2-diacyl-sn-glycero-3-phospho-L-serine + H(+) = a 1,2-diacyl-sn-glycero-3-phosphoethanolamine + CO2. It participates in phospholipid metabolism; phosphatidylethanolamine biosynthesis; phosphatidylethanolamine from CDP-diacylglycerol: step 2/2. Its function is as follows. Catalyzes the formation of phosphatidylethanolamine (PtdEtn) from phosphatidylserine (PtdSer). The sequence is that of Phosphatidylserine decarboxylase proenzyme from Bordetella avium (strain 197N).